A 500-amino-acid polypeptide reads, in one-letter code: Flt3-interacting zinc finger protein 1 (500 aa).

Methionine 1 is subject to N-acetylmethionine. The disordered stretch occupies residues 1 to 24; it reads MEDSSLPVVPAPIAAPGPAPSATA. Residues 9 to 19 show a composition bias toward pro residues; the sequence is VPAPIAAPGPA. 6 consecutive C2H2-type zinc fingers follow at residues 29–51, 57–79, 85–107, 113–136, 204–226, and 232–254; these read FHCS…FARH, HACP…LRSH, YRCS…QVVH, YCCL…KRQH, FACG…WAAH, and FKCP…KLTH. 2 disordered regions span residues 255 to 284 and 306 to 328; these read DLQG…ASEV and KLEA…AAAE. The span at 256 to 267 shows a compositional bias: polar residues; it reads LQGSNAPPTQVW. 5 C2H2-type zinc fingers span residues 336-357, 363-386, 418-440, 446-468, and 474-496; these read YQCD…LEAH, YGCG…RASH, FGCS…VLVH, FPCL…RLLH, and FPCH…LKLH. The interval 383 to 415 is disordered; it reads RASHGEGSGEAAPDGEGNQAAGGPGPGSSSRSK.

As to quaternary structure, interacts with FLT3 cytoplasmic catalytic domain, following receptor stimulation, in a kinase-independent manner. Does not interact with other structurally related receptor tyrosine kinases, including KIT, CSF1R and PDGFR. Interacts with NRL. In terms of tissue distribution, widely expressed. In the retina, highest expression in the ganglion cell layer.

It localises to the cytoplasm. It is found in the nucleus. In terms of biological role, may be a transcriptional repressor of NRL function in photoreceptors. Does not repress CRX-mediated transactivation. The polypeptide is Flt3-interacting zinc finger protein 1 (Fiz1) (Mus musculus (Mouse)).